A 446-amino-acid chain; its full sequence is Methionine aminopeptidase 2-1 (446 aa).

The segment at M1–F88 is disordered. Residues E32–G44 are compositionally biased toward acidic residues. The segment covering A57–G72 has biased composition (basic residues). Substrate is bound at residue H196. 3 residues coordinate a divalent metal cation: D216, D227, and H296. H304 lines the substrate pocket. Residues E332 and E427 each coordinate a divalent metal cation.

The protein belongs to the peptidase M24A family. Methionine aminopeptidase eukaryotic type 2 subfamily. The cofactor is Co(2+). Zn(2+) is required as a cofactor. It depends on Mn(2+) as a cofactor. Fe(2+) serves as cofactor.

The protein localises to the cytoplasm. It carries out the reaction Release of N-terminal amino acids, preferentially methionine, from peptides and arylamides.. In terms of biological role, cotranslationally removes the N-terminal methionine from nascent proteins. The N-terminal methionine is often cleaved when the second residue in the primary sequence is small and uncharged (Met-Ala-, Cys, Gly, Pro, Ser, Thr, or Val). In Blastomyces gilchristii (strain SLH14081) (Blastomyces dermatitidis), this protein is Methionine aminopeptidase 2-1.